The primary structure comprises 560 residues: Dihydroxy-acid dehydratase (560 aa).

Residue Cys-52 participates in [2Fe-2S] cluster binding. Residue Asp-84 coordinates Mg(2+). Cys-125 lines the [2Fe-2S] cluster pocket. The Mg(2+) site is built by Asp-126 and Lys-127. Lys-127 carries the post-translational modification N6-carboxylysine. Residue Cys-197 participates in [2Fe-2S] cluster binding. Residue Glu-448 participates in Mg(2+) binding. Residue Ser-474 is the Proton acceptor of the active site.

It belongs to the IlvD/Edd family. As to quaternary structure, homodimer. The cofactor is [2Fe-2S] cluster. Mg(2+) serves as cofactor.

It carries out the reaction (2R)-2,3-dihydroxy-3-methylbutanoate = 3-methyl-2-oxobutanoate + H2O. It catalyses the reaction (2R,3R)-2,3-dihydroxy-3-methylpentanoate = (S)-3-methyl-2-oxopentanoate + H2O. It functions in the pathway amino-acid biosynthesis; L-isoleucine biosynthesis; L-isoleucine from 2-oxobutanoate: step 3/4. Its pathway is amino-acid biosynthesis; L-valine biosynthesis; L-valine from pyruvate: step 3/4. Its function is as follows. Functions in the biosynthesis of branched-chain amino acids. Catalyzes the dehydration of (2R,3R)-2,3-dihydroxy-3-methylpentanoate (2,3-dihydroxy-3-methylvalerate) into 2-oxo-3-methylpentanoate (2-oxo-3-methylvalerate) and of (2R)-2,3-dihydroxy-3-methylbutanoate (2,3-dihydroxyisovalerate) into 2-oxo-3-methylbutanoate (2-oxoisovalerate), the penultimate precursor to L-isoleucine and L-valine, respectively. This is Dihydroxy-acid dehydratase from Francisella tularensis subsp. novicida (strain U112).